Consider the following 297-residue polypeptide: MRAPSTSANLGSGFDVVAVAHDAYFAEAYVKLTSGCGVDIKFRGFDPGGDNTVRRAFQHLFERLGRCWGVEAEVDNRIPIARGLGSSGASAVAALAAFIREAGLRVDPAAVVEAAGLGEAAAAGSPHFDNVAAAALGGAVVIASVKPLELVKFSPRLTFVVGVPDVPPMPEKTKVMRSVLPREVPFRTYVAQLARVSALVAGFARSDPRLVALGMSDEVVEPARAPHVPAYARVRRYALEAGALAVAISGAGPSMIALVEDRDSGAVRAAVERAYAEEGLRAEVKVASTAEGALKDL.

An ATP-binding site is contributed by 79 to 89 (PIARGLGSSGA).

This sequence belongs to the GHMP kinase family. Homoserine kinase subfamily.

It localises to the cytoplasm. It carries out the reaction L-homoserine + ATP = O-phospho-L-homoserine + ADP + H(+). It functions in the pathway amino-acid biosynthesis; L-threonine biosynthesis; L-threonine from L-aspartate: step 4/5. In terms of biological role, catalyzes the ATP-dependent phosphorylation of L-homoserine to L-homoserine phosphate. The sequence is that of Homoserine kinase from Pyrobaculum neutrophilum (strain DSM 2338 / JCM 9278 / NBRC 100436 / V24Sta) (Thermoproteus neutrophilus).